Reading from the N-terminus, the 313-residue chain is Ribosomal RNA small subunit methyltransferase H (313 aa).

S-adenosyl-L-methionine-binding positions include 33–35 (AGH), aspartate 53, phenylalanine 82, aspartate 103, and glutamine 110.

Belongs to the methyltransferase superfamily. RsmH family.

It is found in the cytoplasm. The catalysed reaction is cytidine(1402) in 16S rRNA + S-adenosyl-L-methionine = N(4)-methylcytidine(1402) in 16S rRNA + S-adenosyl-L-homocysteine + H(+). Functionally, specifically methylates the N4 position of cytidine in position 1402 (C1402) of 16S rRNA. This chain is Ribosomal RNA small subunit methyltransferase H, found in Acetivibrio thermocellus (strain ATCC 27405 / DSM 1237 / JCM 9322 / NBRC 103400 / NCIMB 10682 / NRRL B-4536 / VPI 7372) (Clostridium thermocellum).